The following is a 364-amino-acid chain: Phospho-N-acetylmuramoyl-pentapeptide-transferase (364 aa).

Transmembrane regions (helical) follow at residues 3–23, 51–71, 80–100, 116–136, 154–174, 185–205, 229–249, 256–276, 281–301, and 341–361; these read AILFGGGLALLVSLLGTRVAI, TMGGVVIILATVVGYFGAKLI, ALLLLFLLVGTGLVGFVDDFI, MIGLTVVALVFGILSLSSWLE, IGWITLPTVVVLLLIWLIIAA, LDGLATGASVMVFGAYMFVNI, PLDLAVVAAAITGACFGFLWW, IFMGDTGSLALGGALAGLAIL, LLLIILGGLFVMETVSVMLQV, and FWIITGICVAAGLGVFYAEWV.

This sequence belongs to the glycosyltransferase 4 family. MraY subfamily. Mg(2+) serves as cofactor.

It is found in the cell membrane. It catalyses the reaction UDP-N-acetyl-alpha-D-muramoyl-L-alanyl-gamma-D-glutamyl-meso-2,6-diaminopimeloyl-D-alanyl-D-alanine + di-trans,octa-cis-undecaprenyl phosphate = di-trans,octa-cis-undecaprenyl diphospho-N-acetyl-alpha-D-muramoyl-L-alanyl-D-glutamyl-meso-2,6-diaminopimeloyl-D-alanyl-D-alanine + UMP. It functions in the pathway cell wall biogenesis; peptidoglycan biosynthesis. Functionally, catalyzes the initial step of the lipid cycle reactions in the biosynthesis of the cell wall peptidoglycan: transfers peptidoglycan precursor phospho-MurNAc-pentapeptide from UDP-MurNAc-pentapeptide onto the lipid carrier undecaprenyl phosphate, yielding undecaprenyl-pyrophosphoryl-MurNAc-pentapeptide, known as lipid I. The chain is Phospho-N-acetylmuramoyl-pentapeptide-transferase from Nocardioides sp. (strain ATCC BAA-499 / JS614).